Here is a 189-residue protein sequence, read N- to C-terminus: Small ribosomal subunit protein uS5 (189 aa).

The region spanning 22–85 (FVDKLVAINR…ESAKRDLIFV (64 aa)) is the S5 DRBM domain.

The protein belongs to the universal ribosomal protein uS5 family. Part of the 30S ribosomal subunit. Contacts proteins S4 and S8.

Its function is as follows. With S4 and S12 plays an important role in translational accuracy. Functionally, located at the back of the 30S subunit body where it stabilizes the conformation of the head with respect to the body. The protein is Small ribosomal subunit protein uS5 of Allorhizobium ampelinum (strain ATCC BAA-846 / DSM 112012 / S4) (Agrobacterium vitis (strain S4)).